The sequence spans 160 residues: uncharacterized protein (160 aa).

This sequence to A.fulgidus AF1717.

This is an uncharacterized protein from Bacillus subtilis (strain 168).